The following is a 101-amino-acid chain: CLAVATA3/ESR (CLE)-related protein 18 (101 aa).

A signal peptide spans 1-25 (MHLLKGGVVLIITLILFLITSSIVA). A disordered region spans residues 37–58 (RQIPTGPDPLHNPPQPSPKHHH). Hydroxyproline occurs at positions 40 and 43. Residues 42–53 (GPDPLHNPPQPS) show a composition bias toward pro residues. O-linked (Ara...) hydroxyproline glycosylation occurs at Pro-43. The residue at position 76 (Tyr-76) is a Sulfotyrosine. Residue Pro-84 is modified to Hydroxyproline.

Belongs to the CLV3/ESR signal peptide family. Post-translationally, the tyrosine sulfation is critical for the function of the peptide. In terms of processing, the O-glycosylation (arabinosylation) of the hydroxyproline Pro-43 enhances binding affinity of the CLE18p peptide for its receptor. Expressed in roots, leaves, siliques and seedlings.

The protein resides in the secreted. It is found in the extracellular space. Functionally, root growth factor that regulates the pattern of root growth and lateral root development by modulating the length and the number of cortical cells in the root apical meristem (RAM), and the anticlinal asymmetric cell divisions in lateral root initiation cells. Extracellular signal peptide that regulates cell fate. Represses root apical meristem maintenance. Root growth factor that regulates the pattern of root growth and lateral root development. Regulates the transition of protophloem cells from proliferation to differentiation, thus impinging on postembryonic growth capacity of the root meristem; this signaling pathway requires CRN and CLV2. This is CLAVATA3/ESR (CLE)-related protein 18 from Arabidopsis thaliana (Mouse-ear cress).